The following is a 360-amino-acid chain: G-protein coupled receptor 15 (360 aa).

Over 1–33 (MEPATALLIVDYYDYTSPDPPFLETPSHLSYTS) the chain is Extracellular. Residues 34 to 54 (VFLPIFYTVVFLTGVVGNFIL) traverse the membrane as a helical segment. Topologically, residues 55–69 (MIALHFKRGNRRLID) are cytoplasmic. A helical membrane pass occupies residues 70-90 (IFIINLAASDFIFLVTVPLWM). Residues 91-120 (DKEASLGLWRTGSFLCKGSSYVISVNMHCS) lie on the Extracellular side of the membrane. Residues 121 to 141 (VFLLTCMSMDRYLAIMHPALA) traverse the membrane as a helical segment. The Cytoplasmic segment spans residues 142 to 149 (KRLRRRSS). Residues 150–170 (AYAVCAVVWIISCVLGLPTLL) traverse the membrane as a helical segment. Residues 171-192 (SRELTHIEGKPYCAEKKPTSLK) are Extracellular-facing. A helical membrane pass occupies residues 193–213 (LMWGLVALITTFFVPLLSIVT). The Cytoplasmic segment spans residues 214-239 (CYCCITRRLCAHYQQSGKHNKKLKKS). A helical membrane pass occupies residues 240–260 (IKIVIIAVAAFTVSWVPFNTF). The Extracellular segment spans residues 261–284 (KLLAIVSGFQPEGLFHSEALQLAM). Residues 285-305 (NVTGPLAFASSCVNPLIYYVF) traverse the membrane as a helical segment. At 306–360 (DSYIRRAIVRCLCPCLKTHNFGSSTETSDSHLTKALSNFIHAEDFIRRRKRSVSL) the chain is on the cytoplasmic side. Ser-359 is modified (phosphoserine).

This sequence belongs to the G-protein coupled receptor 1 family. Interacts with adapter YWHAE; this interaction promotes ER-to-Golgi transport of GPR15. Phosphorylation is necessary for YWHAE binding and efficient surface expression. Post-translationally, O-glycosylated. Sialylated O-glycans in the N-terminal tail inhibits binding of GPR15LG. In terms of processing, sulfation is required for efficient binding of GPR15LG. As to expression, highly expressed in gut tissues and lymphoid organs, largely restricted to TCRbeta+ cells. Expressed in fetal thymic dendritic epidermal T-cell precursors.

It is found in the cell membrane. G protein-coupled receptor that plays an important role in immune homeostasis. Acts via its natural ligand GPR15LG, a chemokine-like polypeptide strongly expressed in gastrointestinal tissues. GPR15-GPR15LG signaling axis regulates intestinal homeostasis and inflammation through the migration of immune cells. Controls thereby the specific homing of T-cells, particularly FOXP3+ regulatory T-cells (Tregs), to the large intestine lamina propria. Also required for skin localization of thymus-derived dendritic epidermal T-cells. Plays an important role in mediating cytoprotective function as well as angiogenesis of thrombomodulin. Mechanistically, preferentially signals through the Gi/o pathway to inhibit adenylate cyclase activity and activate a phosphatidylinositol-calcium second messenger system that regulates the release of Ca(2+) ions from intracellular stores. In Mus musculus (Mouse), this protein is G-protein coupled receptor 15 (Gpr15).